The following is a 293-amino-acid chain: 33 kDa chaperonin (293 aa).

2 disulfide bridges follow: cysteine 237–cysteine 239 and cysteine 271–cysteine 274.

The protein belongs to the HSP33 family. In terms of processing, under oxidizing conditions two disulfide bonds are formed involving the reactive cysteines. Under reducing conditions zinc is bound to the reactive cysteines and the protein is inactive.

It is found in the cytoplasm. Its function is as follows. Redox regulated molecular chaperone. Protects both thermally unfolding and oxidatively damaged proteins from irreversible aggregation. Plays an important role in the bacterial defense system toward oxidative stress. In Haemophilus influenzae (strain PittEE), this protein is 33 kDa chaperonin.